The primary structure comprises 237 residues: Uridylate kinase (237 aa).

An ATP-binding site is contributed by lysine 9–glycine 12. Glycine 51 is a UMP binding site. Residues glycine 52 and arginine 56 each coordinate ATP. Residues aspartate 71 and cysteine 132 to threonine 139 each bind UMP. Residues threonine 159, tyrosine 165, and aspartate 168 each contribute to the ATP site.

This sequence belongs to the UMP kinase family. In terms of assembly, homohexamer.

It localises to the cytoplasm. It carries out the reaction UMP + ATP = UDP + ADP. It participates in pyrimidine metabolism; CTP biosynthesis via de novo pathway; UDP from UMP (UMPK route): step 1/1. Inhibited by UTP. In terms of biological role, catalyzes the reversible phosphorylation of UMP to UDP. The chain is Uridylate kinase from Prochlorococcus marinus (strain SARG / CCMP1375 / SS120).